A 95-amino-acid chain; its full sequence is Histone-like DNA-binding protein (95 aa).

Belongs to the bacterial histone-like protein family.

In Rickettsia conorii (strain ATCC VR-613 / Malish 7), this protein is Histone-like DNA-binding protein.